Here is a 222-residue protein sequence, read N- to C-terminus: Small ribosomal subunit protein eS1 (222 aa).

The protein belongs to the eukaryotic ribosomal protein eS1 family.

The polypeptide is Small ribosomal subunit protein eS1 (Pyrobaculum islandicum (strain DSM 4184 / JCM 9189 / GEO3)).